Here is a 1062-residue protein sequence, read N- to C-terminus: Carbamoyl phosphate synthase large chain (1062 aa).

The interval 1–401 is carboxyphosphate synthetic domain; it reads MPKRTDIHKI…AMQKAVRSLE (401 aa). The ATP site is built by arginine 129, arginine 169, glycine 175, glycine 176, lysine 208, isoleucine 210, glutamate 215, glycine 241, isoleucine 242, histidine 243, glutamine 284, and glutamate 298. The 195-residue stretch at 133–327 folds into the ATP-grasp 1 domain; that stretch reads KELCKELGEP…IAKMAAKIAI (195 aa). Glutamine 284, glutamate 298, and asparagine 300 together coordinate Mg(2+). Mn(2+) contacts are provided by glutamine 284, glutamate 298, and asparagine 300. Positions 402–546 are oligomerization domain; sequence IDEKDLYSET…YSTYDGENES (145 aa). A carbamoyl phosphate synthetic domain region spans residues 547-929; the sequence is HKSGKKSVIV…ALYKAFAGAK (383 aa). The ATP-grasp 2 domain occupies 671–861; sequence DQIIKKLKLN…MAQVATRVIM (191 aa). Positions 707, 746, 748, 752, 777, 778, 779, 780, 820, and 832 each coordinate ATP. Residues glutamine 820, glutamate 832, and asparagine 834 each coordinate Mg(2+). Positions 820, 832, and 834 each coordinate Mn(2+). Positions 930–1062 constitute an MGS-like domain; sequence MQLPENGNVL…NRSFATDALK (133 aa). Residues 930–1062 form an allosteric domain region; that stretch reads MQLPENGNVL…NRSFATDALK (133 aa).

This sequence belongs to the CarB family. In terms of assembly, composed of two chains; the small (or glutamine) chain promotes the hydrolysis of glutamine to ammonia, which is used by the large (or ammonia) chain to synthesize carbamoyl phosphate. Tetramer of heterodimers (alpha,beta)4. The cofactor is Mg(2+). Requires Mn(2+) as cofactor.

The enzyme catalyses hydrogencarbonate + L-glutamine + 2 ATP + H2O = carbamoyl phosphate + L-glutamate + 2 ADP + phosphate + 2 H(+). It catalyses the reaction hydrogencarbonate + NH4(+) + 2 ATP = carbamoyl phosphate + 2 ADP + phosphate + 2 H(+). It functions in the pathway amino-acid biosynthesis; L-arginine biosynthesis; carbamoyl phosphate from bicarbonate: step 1/1. Its pathway is pyrimidine metabolism; UMP biosynthesis via de novo pathway; (S)-dihydroorotate from bicarbonate: step 1/3. Large subunit of the glutamine-dependent carbamoyl phosphate synthetase (CPSase). CPSase catalyzes the formation of carbamoyl phosphate from the ammonia moiety of glutamine, carbonate, and phosphate donated by ATP, constituting the first step of 2 biosynthetic pathways, one leading to arginine and/or urea and the other to pyrimidine nucleotides. The large subunit (synthetase) binds the substrates ammonia (free or transferred from glutamine from the small subunit), hydrogencarbonate and ATP and carries out an ATP-coupled ligase reaction, activating hydrogencarbonate by forming carboxy phosphate which reacts with ammonia to form carbamoyl phosphate. The chain is Carbamoyl phosphate synthase large chain from Lactobacillus johnsonii (strain CNCM I-12250 / La1 / NCC 533).